We begin with the raw amino-acid sequence, 150 residues long: Protein Smg homolog (150 aa).

The protein belongs to the Smg family.

The polypeptide is Protein Smg homolog (Leptothrix cholodnii (strain ATCC 51168 / LMG 8142 / SP-6) (Leptothrix discophora (strain SP-6))).